We begin with the raw amino-acid sequence, 194 residues long: NADH-quinone oxidoreductase subunit B 1 (194 aa).

C73, C74, C138, and C168 together coordinate [4Fe-4S] cluster.

Belongs to the complex I 20 kDa subunit family. NDH-1 is composed of 14 different subunits. Subunits NuoB, C, D, E, F, and G constitute the peripheral sector of the complex. The cofactor is [4Fe-4S] cluster.

Its subcellular location is the cell inner membrane. It carries out the reaction a quinone + NADH + 5 H(+)(in) = a quinol + NAD(+) + 4 H(+)(out). Its function is as follows. NDH-1 shuttles electrons from NADH, via FMN and iron-sulfur (Fe-S) centers, to quinones in the respiratory chain. The immediate electron acceptor for the enzyme in this species is believed to be ubiquinone. Couples the redox reaction to proton translocation (for every two electrons transferred, four hydrogen ions are translocated across the cytoplasmic membrane), and thus conserves the redox energy in a proton gradient. This Rhizobium etli (strain CIAT 652) protein is NADH-quinone oxidoreductase subunit B 1.